Consider the following 461-residue polypeptide: MAGLRPGAGVPPGTPWPISPGKHCVRSAISRRARLPYHAPGTPLGRFRRAPDEGSCRMAHIAFFILPAAGHVNPTLGVAEELAARGHRVTYALPEDMADRAVRVGARAVTYPLDRERFRADMVPKEESDEYTDEGEFLKVLEWLLDTTADTLPLLESAFAEDRPDVVANDPSTFWTGLLLAGKWDIPVIRSTPSYASNEHWALHPPFEPGAAQVDPALIELTARAEKLLKEHGTTSDPVAFAATVQSGPGLFYMPRYFQYAGETFDDRHHFVGPCAPRASFHGTWQRPEDGRPLVMVSLGTIYNERPGIFRACVEAFRDRPWNILLVLGGGLGAGDLGPLPENVLVRDFVPLGDVLPHTDLLVNHGGTSTAMEALAHGVPIVAMPEMPEPRATARRIAELDLGDWLLPGEVTAEKLSGIAQRVLTDDRIRKGLDRMRGEIRRAGGPAVAADVIEGLLSPAA.

The disordered stretch occupies residues 1–21 (MAGLRPGAGVPPGTPWPISPG).

The protein belongs to the UDP-glycosyltransferase family.

The enzyme catalyses dTDP-beta-L-mycarose + demethyllactenocin = demethylmacrocin + dTDP + H(+). Functionally, involved in the biosynthesis of mycarose which is a 6-deoxyhexose sugar required during production of the macrolide antibiotic tylosin. Catalyzes the transfer of L-mycarosyl from dTDP-beta-L-mycarose to demethyllactenocin to yield demethylmacrocin. The protein is Demethyllactenocin mycarosyltransferase (tylCV) of Streptomyces fradiae (Streptomyces roseoflavus).